The chain runs to 951 residues: Glycine dehydrogenase (decarboxylating) (951 aa).

Lys-709 is subject to N6-(pyridoxal phosphate)lysine.

This sequence belongs to the GcvP family. In terms of assembly, the glycine cleavage system is composed of four proteins: P, T, L and H. The cofactor is pyridoxal 5'-phosphate.

It carries out the reaction N(6)-[(R)-lipoyl]-L-lysyl-[glycine-cleavage complex H protein] + glycine + H(+) = N(6)-[(R)-S(8)-aminomethyldihydrolipoyl]-L-lysyl-[glycine-cleavage complex H protein] + CO2. Its function is as follows. The glycine cleavage system catalyzes the degradation of glycine. The P protein binds the alpha-amino group of glycine through its pyridoxal phosphate cofactor; CO(2) is released and the remaining methylamine moiety is then transferred to the lipoamide cofactor of the H protein. This is Glycine dehydrogenase (decarboxylating) from Gluconobacter oxydans (strain 621H) (Gluconobacter suboxydans).